Consider the following 266-residue polypeptide: Pyridoxal phosphate phosphatase YigL (266 aa).

The active-site Nucleophile is Asp8. Position 8 (Asp8) interacts with Mg(2+). Phosphate is bound at residue Leu9. Asp10 is a binding site for Mg(2+). Residues 42-43 (TG) and Lys191 contribute to the phosphate site. Asp214 is a Mg(2+) binding site. Residue Asn217 participates in phosphate binding.

This sequence belongs to the HAD-like hydrolase superfamily. Cof family. Mg(2+) serves as cofactor. Requires Mn(2+) as cofactor. The cofactor is Co(2+). It depends on Zn(2+) as a cofactor.

The catalysed reaction is pyridoxal 5'-phosphate + H2O = pyridoxal + phosphate. It carries out the reaction sugar phosphate + H2O = sugar + phosphate.. Catalyzes Strongly the dephosphorylation of pyridoxal-phosphate (PLP) and moderately the dephosphorylation of 2-deoxyglucose 6-phosphate (2bGLU6P) and beta-glucose 6-phosphate (bGlu6P). Also hydrolyzes both purines (GMP and IMP) and pyrimidines as secondary substrates. This Escherichia coli (strain K12) protein is Pyridoxal phosphate phosphatase YigL (yigL).